A 198-amino-acid chain; its full sequence is Type 1 fimbriae regulatory protein FimE (198 aa).

Positions Ser2 to Glu184 constitute a Tyr recombinase domain. Catalysis depends on residues Arg41, Lys66, His136, Arg139, and His162. The active-site O-(3'-phospho-DNA)-tyrosine intermediate is Tyr171.

It belongs to the 'phage' integrase family.

Functionally, fimE is one of the 2 regulatory proteins which control the phase variation of type 1 fimbriae in E.coli. These proteins mediate the periodic inversion of a 300bp DNA segment that harbors the promoter for the fimbrial structural gene, fimA. FimE switches fimA off. The chain is Type 1 fimbriae regulatory protein FimE (fimE) from Escherichia coli O6:H1 (strain CFT073 / ATCC 700928 / UPEC).